The sequence spans 309 residues: Tagatose-6-phosphate kinase (309 aa).

This sequence belongs to the carbohydrate kinase PfkB family. LacC subfamily.

The catalysed reaction is D-tagatofuranose 6-phosphate + ATP = D-tagatofuranose 1,6-bisphosphate + ADP + H(+). It functions in the pathway carbohydrate metabolism; D-tagatose 6-phosphate degradation; D-glyceraldehyde 3-phosphate and glycerone phosphate from D-tagatose 6-phosphate: step 1/2. This is Tagatose-6-phosphate kinase from Streptococcus pneumoniae (strain ATCC 700669 / Spain 23F-1).